The following is a 271-amino-acid chain: Urease accessory protein UreD (271 aa).

It belongs to the UreD family. In terms of assembly, ureD, UreF and UreG form a complex that acts as a GTP-hydrolysis-dependent molecular chaperone, activating the urease apoprotein by helping to assemble the nickel containing metallocenter of UreC. The UreE protein probably delivers the nickel.

It is found in the cytoplasm. In terms of biological role, required for maturation of urease via the functional incorporation of the urease nickel metallocenter. In Haemophilus influenzae (strain PittGG), this protein is Urease accessory protein UreD.